Reading from the N-terminus, the 89-residue chain is Small ribosomal subunit protein uS15 (89 aa).

The protein belongs to the universal ribosomal protein uS15 family. Part of the 30S ribosomal subunit. Forms a bridge to the 50S subunit in the 70S ribosome, contacting the 23S rRNA.

Functionally, one of the primary rRNA binding proteins, it binds directly to 16S rRNA where it helps nucleate assembly of the platform of the 30S subunit by binding and bridging several RNA helices of the 16S rRNA. In terms of biological role, forms an intersubunit bridge (bridge B4) with the 23S rRNA of the 50S subunit in the ribosome. The polypeptide is Small ribosomal subunit protein uS15 (Herminiimonas arsenicoxydans).